The chain runs to 341 residues: MSFPYSLKPFNTFGVEQSCLSMIEVHSKAELQSTCLSLYQSKRPMLVLGGGSNIVFTDDFNGTVVRVLTKGISCSEDGTHFYLAVEAGENWHELVHFSLNQDMPGLENLALIPGTVGAAPIQNIGAYGVELCDICDWVEYLDLESGNLLRLTADECEFAYRESIFKGCLRDKAVITAVGLRLPKAWQPKLAYGPLQSFNAETVTPREIFERVCEVRSEKLPNPEELGNAGSFFKNPIVSAATYMQLAAHFPSIVGYAQPNGEVKLAAGWLIEHAGLKGFALGNAGVHAKQALVLVNLGHATGQDICRLALHVIARVNEVFGVKLEAEPRIMGLTGETSLDV.

The FAD-binding PCMH-type domain maps to phenylalanine 13 to alanine 185. Arginine 161 is a catalytic residue. Serine 231 acts as the Proton donor in catalysis. Glutamate 327 is an active-site residue.

The protein belongs to the MurB family. FAD serves as cofactor.

The protein localises to the cytoplasm. The enzyme catalyses UDP-N-acetyl-alpha-D-muramate + NADP(+) = UDP-N-acetyl-3-O-(1-carboxyvinyl)-alpha-D-glucosamine + NADPH + H(+). Its pathway is cell wall biogenesis; peptidoglycan biosynthesis. Its function is as follows. Cell wall formation. In Shewanella sp. (strain MR-4), this protein is UDP-N-acetylenolpyruvoylglucosamine reductase.